Here is a 292-residue protein sequence, read N- to C-terminus: Forkhead box protein R1 (292 aa).

2 disordered regions span residues 31–50 and 65–166; these read PPKL…PDYE and PGKL…ASSQ. 2 stretches are compositionally biased toward basic and acidic residues: residues 35–47 and 70–79; these read PLEK…KDGP and VSGRRKREDL. The span at 80-89 shows a compositional bias: polar residues; sequence TSTLPSSQPP. Over residues 129–140 the composition is skewed to acidic residues; it reads LTEEEEAEDQED. Residues 149 to 161 show a composition bias toward basic residues; that stretch reads PHKRAPLQSRRLR. The fork-head DNA-binding region spans 173–272; it reads RPPLNYFHLI…EEARALASTR (100 aa).

In terms of tissue distribution, expressed in testis (at protein level).

The protein resides in the nucleus. The protein localises to the cytoplasm. Its subcellular location is the perinuclear region. Functionally, transcription factor which acts as both an activator and a repressor. Activates transcription of a number of genes including the heat shock chaperones HSPA1A and HSPA6 and the antioxidant NADPH-dependent reductase DHRS2 which are involved in protection against oxidative stress. Required for normal brain development. This Homo sapiens (Human) protein is Forkhead box protein R1 (FOXR1).